A 281-amino-acid chain; its full sequence is MASPMGSTASLTGPVVRARARLRYSTITPMKARRVVDLVRGLPADEALTTLQFLPQAASATVYKVLASAIANAQQEAAKQGERLDAEDLVVSAAYVDEGPTLKRFRPRAQGRAYRIRKRTSHITIHVESWPAEAETRATKKAVPKGARHRRRLTGAGKPAASAATETPAAQPVAATTETVEVEAAATAGAPPTVETPVAVASAATETPAATAAETKAGGAAEAEVATTDEQTTETAPAAEAEKPAVRRPAARKSTTSARRRAAETEGHDSDAESTDEGGTR.

Residues 1–225 are large ribosomal subunit protein uL22; that stretch reads MASPMGSTAS…KAGGAAEAEV (225 aa). Disordered stretches follow at residues 137 to 175 and 199 to 281; these read RATKKAVPKGARHRRRLTGAGKPAASAATETPAAQPVAA and AVAS…GGTR. Residues 139–153 show a composition bias toward basic residues; that stretch reads TKKAVPKGARHRRRL. 2 stretches are compositionally biased toward low complexity: residues 159–175 and 199–239; these read PAASAATETPAAQPVAA and AVAS…APAA. The tract at residues 226-281 is unknown; sequence ATTDEQTTETAPAAEAEKPAVRRPAARKSTTSARRRAAETEGHDSDAESTDEGGTR. The segment covering 261–271 has biased composition (basic and acidic residues); it reads RAAETEGHDSD. The segment covering 272–281 has biased composition (acidic residues); sequence AESTDEGGTR.

It belongs to the universal ribosomal protein uL22 family. As to quaternary structure, part of the 50S ribosomal subunit.

Its function is as follows. The globular domain of the protein is located near the polypeptide exit tunnel on the outside of the subunit, while an extended beta-hairpin is found that lines the wall of the exit tunnel in the center of the 70S ribosome. Functionally, this protein binds specifically to 23S rRNA; its binding is stimulated by other ribosomal proteins, e.g. L4, L17, and L20. It is important during the early stages of 50S assembly. It makes multiple contacts with different domains of the 23S rRNA in the assembled 50S subunit and ribosome. This Acidothermus cellulolyticus (strain ATCC 43068 / DSM 8971 / 11B) protein is Large ribosomal subunit protein uL22.